The primary structure comprises 380 residues: Cytochrome b (380 aa).

4 consecutive transmembrane segments (helical) span residues 33-53, 77-98, 113-133, and 178-198; these read FGSL…FLAM, WLIR…YMHI, WNIG…GYVL, and FFAF…LHLL. Heme b contacts are provided by histidine 83 and histidine 97. Residues histidine 182 and histidine 196 each contribute to the heme b site. Residue histidine 201 coordinates a ubiquinone. Helical transmembrane passes span 226–246, 288–308, 320–340, and 347–367; these read YKDL…ALFA, LGGV…PILH, LTQF…WIGG, and FIII…VLAP.

Belongs to the cytochrome b family. As to quaternary structure, the cytochrome bc1 complex contains 3 respiratory subunits (MT-CYB, CYC1 and UQCRFS1), 2 core proteins (UQCRC1 and UQCRC2) and probably 6 low-molecular weight proteins. Requires heme b as cofactor.

The protein localises to the mitochondrion inner membrane. Its function is as follows. Component of the ubiquinol-cytochrome c reductase complex (complex III or cytochrome b-c1 complex) that is part of the mitochondrial respiratory chain. The b-c1 complex mediates electron transfer from ubiquinol to cytochrome c. Contributes to the generation of a proton gradient across the mitochondrial membrane that is then used for ATP synthesis. This Salmo salar (Atlantic salmon) protein is Cytochrome b (mt-cyb).